A 523-amino-acid polypeptide reads, in one-letter code: Glycerate kinase (523 aa).

Ser-60 is modified (phosphoserine). An N6-acetyllysine modification is found at Lys-200.

Belongs to the glycerate kinase type-2 family. In terms of tissue distribution, expressed in the hippocampus, callus, brain, cerebellum, renal cortex interstitial cells, epithelium of interlobular bile duct and skeletal muscle.

It is found in the cytoplasm. It catalyses the reaction (R)-glycerate + ATP = (2R)-3-phosphoglycerate + ADP + H(+). This is Glycerate kinase (Glyctk) from Mus musculus (Mouse).